We begin with the raw amino-acid sequence, 301 residues long: MIKSFNEIIMKVKSKEMKKVAVAVAQDEPVLEAVRDAKKNGIADAILVGDHDEIVSIALKIGMDVNDFEIVNEPNVKKAALKAVELVSTGKADMVMKGLVNTATFLRSVLNKEVGLRTGKTMSHVAVFETEKFDRLLFLTDVAFNTYPELKEKIDIVNNSVKVAHAIGIENPKVAPICAVEVINPKMPSTLDAAMLSKMSDRGQIKGCVVDGPLALDIALSEEAAHHKGVTGEVAGKADIFLMPNIETGNVMYKTLTYTTDSKNGGILVGTSAPVVLTSRADSHETKMNSIALAALVAGNK.

This sequence belongs to the phosphate acetyltransferase and butyryltransferase family.

The enzyme catalyses butanoyl-CoA + phosphate = butanoyl phosphate + CoA. It functions in the pathway lipid metabolism; butanoate metabolism. Functionally, catalyzes the conversion of butyryl-CoA through butyryl phosphate to butyrate. In Clostridium acetobutylicum (strain ATCC 824 / DSM 792 / JCM 1419 / IAM 19013 / LMG 5710 / NBRC 13948 / NRRL B-527 / VKM B-1787 / 2291 / W), this protein is Phosphate butyryltransferase (ptb).